The following is a 708-amino-acid chain: MEVSELPLDARLIAVLKERGVGRLFPPQVEAVRAGIFDGRSVLLCTATASGKSLLAEVAAVKAGLEGRMALYAVPLKALAYEKLVHFSYYRGLVKVGVSTGDFDSDDRRLHEFDVVVVTYEKLDSLLRHRPNWLGLVGVVVVDEIHYLGDPRRGPVLESIVAKLRHLGLKTQFIGLSATVGNAGEVAAWLGARLVESSWRPVPLREGVYHGGVIRFSDGSMQRVNAPGDAEVALAVDAVAGGGQALVFTNSRSSTVRLAKAVAKAMEAAGLVPRGAKALAEEVLKASSSKIIGRELADLVARGVAFHNAGLELEVRRLVEDGFRRGLLKVVVSTTTLAAGVNLPARRVVVADYERFDPALGREEIPVLEYRQMAGRAGRPGLDPYGEAVLVARSKGEAEYLMERYVRGQVEGVRSHILAEPNLRAHVLGAVGGGYAKSLDDLVDFFSNTLGAAQMKTSLKLSILRSKIGGVVEELVEWGFLERDGDFVYATELGRQVARLYLDPEVAAGYIRLIKSLRAGNVPAYLYVVLTAPDFPRVRRGRADKRVVEGILAALDVEEDEEFEDLARTASMLMAWIEEVDEDVIYEKFDVAPGDLRVYVDLFQWLGNAAAKLARLVGREEHGKRLEVVTARVVYGVREELLGLVTSLRGVGRVRARTLYNFGYRTLEDIARATVREIASLPGFGEKLAESVIEQARQMLAEGLRGEV.

ATP-binding positions include Gln28 and 46-53 (TATASGKS). In terms of domain architecture, Helicase ATP-binding spans 33 to 198 (RAGIFDGRSV…WLGARLVESS (166 aa)). A DEAH box motif is present at residues 143–146 (DEIH). In terms of domain architecture, Helicase C-terminal spans 231–429 (EVALAVDAVA…EPNLRAHVLG (199 aa)).

The protein belongs to the helicase family. Hel308 subfamily. Monomer.

The catalysed reaction is Couples ATP hydrolysis with the unwinding of duplex DNA by translocating in the 3'-5' direction.. The enzyme catalyses ATP + H2O = ADP + phosphate + H(+). DNA-dependent ATPase and 3'-5' DNA helicase that may be involved in repair of stalled replication forks. The polypeptide is ATP-dependent DNA helicase Hel308 (Pyrobaculum calidifontis (strain DSM 21063 / JCM 11548 / VA1)).